Reading from the N-terminus, the 935-residue chain is Isoleucine--tRNA ligase (935 aa).

The 'HIGH' region signature appears at 58-68 (PYANGSIHVGH). Glu-558 serves as a coordination point for L-isoleucyl-5'-AMP. The 'KMSKS' region signature appears at 599-603 (KMSKS). Lys-602 contributes to the ATP binding site. Zn(2+) is bound by residues Cys-897, Cys-900, Cys-917, and Cys-920.

The protein belongs to the class-I aminoacyl-tRNA synthetase family. IleS type 1 subfamily. As to quaternary structure, monomer. The cofactor is Zn(2+).

The protein localises to the cytoplasm. It catalyses the reaction tRNA(Ile) + L-isoleucine + ATP = L-isoleucyl-tRNA(Ile) + AMP + diphosphate. Functionally, catalyzes the attachment of isoleucine to tRNA(Ile). As IleRS can inadvertently accommodate and process structurally similar amino acids such as valine, to avoid such errors it has two additional distinct tRNA(Ile)-dependent editing activities. One activity is designated as 'pretransfer' editing and involves the hydrolysis of activated Val-AMP. The other activity is designated 'posttransfer' editing and involves deacylation of mischarged Val-tRNA(Ile). The sequence is that of Isoleucine--tRNA ligase from Francisella tularensis subsp. novicida (strain U112).